Reading from the N-terminus, the 248-residue chain is MARAILWVLLTVMAVSLLLHAGVEGVNFDIENQCPYTVWAAGTPFGGGIELKRGQSWRVNVPGGARGRFWGRTGCSFDGNGRGRCNTGDCGGLLNCQGSGGVPSTLLEYALNQYQNLDFYDISLVDGFNLRMTVVLSNTNCKRIACNSDINSKCPGELKVVDGCRSACAAFNTPAYCCTGSFLDNCPPTGYSQFFKRECPLAYSYAKDDPTSTFTCPGGSDYKIIFCGNGDSQSNSTSTSSGSLYAVE.

The first 25 residues, 1-25, serve as a signal peptide directing secretion; that stretch reads MARAILWVLLTVMAVSLLLHAGVEG. Intrachain disulfides connect Cys-34–Cys-227, Cys-75–Cys-85, Cys-90–Cys-96, Cys-141–Cys-216, Cys-146–Cys-199, Cys-154–Cys-164, Cys-168–Cys-177, and Cys-178–Cys-186. Asn-235 carries N-linked (GlcNAc...) asparagine glycosylation.

The protein belongs to the thaumatin family. In terms of tissue distribution, mainly expressed in male and female strobili, and, at lower levels, in roots of seedlings and saplings.

In terms of biological role, may be involved in disease resistance. The polypeptide is Pathogenesis-related thaumatin-like protein 3.4 (Cryptomeria japonica (Japanese cedar)).